The sequence spans 103 residues: Large ribosomal subunit protein bL21 (103 aa).

Belongs to the bacterial ribosomal protein bL21 family. As to quaternary structure, part of the 50S ribosomal subunit. Contacts protein L20.

Functionally, this protein binds to 23S rRNA in the presence of protein L20. The sequence is that of Large ribosomal subunit protein bL21 from Aromatoleum aromaticum (strain DSM 19018 / LMG 30748 / EbN1) (Azoarcus sp. (strain EbN1)).